Consider the following 387-residue polypeptide: Histone deacetylase 2 (387 aa).

A histone deacetylase region spans residues 73–382 (KVSIIYSSSY…IENLSRQGLI (310 aa)). Histidine 201 (proton donor/acceptor) is an active-site residue. Aspartate 238, histidine 240, and aspartate 318 together coordinate Zn(2+).

The protein belongs to the histone deacetylase family. HD type 3 subfamily. The cofactor is Zn(2+).

It localises to the nucleus. The enzyme catalyses N(6)-acetyl-L-lysyl-[histone] + H2O = L-lysyl-[histone] + acetate. Responsible for the deacetylation of lysine residues on the N-terminal part of the core histones (H2A, H2B, H3 and H4). Histone deacetylation gives a tag for epigenetic repression and plays an important role in transcriptional regulation, cell cycle progression and developmental events. Histone deacetylases act via the formation of large multiprotein complexes. The protein is Histone deacetylase 2 (HDA2) of Arabidopsis thaliana (Mouse-ear cress).